A 180-amino-acid polypeptide reads, in one-letter code: NAD(P)H-quinone oxidoreductase subunit I, chloroplastic (180 aa).

4Fe-4S ferredoxin-type domains lie at 55-84 (GRIHFEFDKCIACEVCVRVCPIDLPVVDWR) and 95-124 (LNYSIDFGICIFCGNCVEYCPTNCLSMTEE). Cysteine 64, cysteine 67, cysteine 70, cysteine 74, cysteine 104, cysteine 107, cysteine 110, and cysteine 114 together coordinate [4Fe-4S] cluster.

The protein belongs to the complex I 23 kDa subunit family. As to quaternary structure, NDH is composed of at least 16 different subunits, 5 of which are encoded in the nucleus. [4Fe-4S] cluster is required as a cofactor.

It localises to the plastid. The protein localises to the chloroplast thylakoid membrane. It carries out the reaction a plastoquinone + NADH + (n+1) H(+)(in) = a plastoquinol + NAD(+) + n H(+)(out). The catalysed reaction is a plastoquinone + NADPH + (n+1) H(+)(in) = a plastoquinol + NADP(+) + n H(+)(out). Functionally, NDH shuttles electrons from NAD(P)H:plastoquinone, via FMN and iron-sulfur (Fe-S) centers, to quinones in the photosynthetic chain and possibly in a chloroplast respiratory chain. The immediate electron acceptor for the enzyme in this species is believed to be plastoquinone. Couples the redox reaction to proton translocation, and thus conserves the redox energy in a proton gradient. This Illicium oligandrum (Star anise) protein is NAD(P)H-quinone oxidoreductase subunit I, chloroplastic.